The following is a 338-amino-acid chain: Solute carrier family 35 member G6 (338 aa).

Residues 1 to 25 (MAGSHPYLNPPDSTHPSPPSAPPSL) form a disordered region. Helical transmembrane passes span 40-60 (LLVA…LSHM), 67-87 (LPSL…ALLL), 105-125 (YFYA…VQVV), 160-180 (CGLL…LWTL), 190-210 (ALGY…LLVY), 221-241 (TVAF…LFVL), 255-275 (CVGA…YAVT), 281-301 (LVCA…YYML), and 310-330 (IVGA…NLSC). The 126-residue stretch at 49–174 (LPAGFVGPLS…SILGLIIIVG (126 aa)) folds into the EamA 1 domain. The 54-residue stretch at 272-325 (YAVTKAHPALVCAVLHSEVVVALILQYYMLHETVAPSDIVGAGVVLGSIAIITA) folds into the EamA 2 domain.

Belongs to the SLC35G solute transporter family. Expressed in placenta and testis.

The protein resides in the membrane. This Homo sapiens (Human) protein is Solute carrier family 35 member G6 (SLC35G6).